The sequence spans 158 residues: L-alanine exporter AlaE (158 aa).

4 helical membrane passes run 23 to 43 (FAMV…VSGM), 53 to 73 (LVAI…RDAV), 92 to 112 (VIAY…FVGA), and 117 to 137 (IITA…AYGY).

It belongs to the AlaE exporter family.

The protein resides in the cell inner membrane. Its function is as follows. Exports L-alanine. The sequence is that of L-alanine exporter AlaE from Cronobacter sakazakii (strain ATCC BAA-894) (Enterobacter sakazakii).